The primary structure comprises 146 residues: Snaclec 1 (146 aa).

The N-terminal stretch at Met-1–Ala-23 is a signal peptide. 3 disulfides stabilise this stretch: Cys-25–Cys-36, Cys-53–Cys-142, and Cys-119–Cys-134. One can recognise a C-type lectin domain in the interval Tyr-32–Lys-143.

It belongs to the snaclec family. As to quaternary structure, heterodimer; disulfide-linked. Expressed by the venom gland.

It is found in the secreted. Functionally, interferes with one step of hemostasis (modulation of platelet aggregation, or coagulation cascade, for example). The chain is Snaclec 1 from Bitis arietans (African puff adder).